The following is a 218-amino-acid chain: Putative glutamine transport system permease protein GlnP (218 aa).

The region spanning Thr-19–Ala-208 is the ABC transmembrane type-1 domain. 4 helical membrane-spanning segments follow: residues Tyr-25–Val-45, Phe-57–Pro-79, Phe-86–Ile-108, and Phe-187–Ile-207.

This sequence belongs to the binding-protein-dependent transport system permease family. HisMQ subfamily.

It is found in the cell inner membrane. Functionally, part of the binding-protein-dependent transport system for glutamine; probably responsible for the translocation of the substrate across the membrane. In Rickettsia bellii (strain RML369-C), this protein is Putative glutamine transport system permease protein GlnP (glnP).